Consider the following 281-residue polypeptide: Probable endonuclease 4 (281 aa).

H69, H109, E145, D179, H182, H216, D229, H231, and E261 together coordinate Zn(2+).

It belongs to the AP endonuclease 2 family. Zn(2+) is required as a cofactor.

It catalyses the reaction Endonucleolytic cleavage to 5'-phosphooligonucleotide end-products.. Functionally, endonuclease IV plays a role in DNA repair. It cleaves phosphodiester bonds at apurinic or apyrimidinic (AP) sites, generating a 3'-hydroxyl group and a 5'-terminal sugar phosphate. The polypeptide is Probable endonuclease 4 (Pectobacterium carotovorum subsp. carotovorum (strain PC1)).